The following is a 256-amino-acid chain: 1-(5-phosphoribosyl)-5-[(5-phosphoribosylamino)methylideneamino] imidazole-4-carboxamide isomerase (256 aa).

The active-site Proton acceptor is the D8. Catalysis depends on D129, which acts as the Proton donor.

The protein belongs to the HisA/HisF family.

It localises to the cytoplasm. The enzyme catalyses 1-(5-phospho-beta-D-ribosyl)-5-[(5-phospho-beta-D-ribosylamino)methylideneamino]imidazole-4-carboxamide = 5-[(5-phospho-1-deoxy-D-ribulos-1-ylimino)methylamino]-1-(5-phospho-beta-D-ribosyl)imidazole-4-carboxamide. Its pathway is amino-acid biosynthesis; L-histidine biosynthesis; L-histidine from 5-phospho-alpha-D-ribose 1-diphosphate: step 4/9. The sequence is that of 1-(5-phosphoribosyl)-5-[(5-phosphoribosylamino)methylideneamino] imidazole-4-carboxamide isomerase from Syntrophobacter fumaroxidans (strain DSM 10017 / MPOB).